A 968-amino-acid chain; its full sequence is MASISDDGMALSGYLKKLKTMKKKFFVLYEETSTSAARLEYYDTEKKFLQRAEPKRVIYLKNCFNINRRLDTKHRFVIVLSSRDGGFGIVLENENDLRKWLDKLLVLQRNIANSNGTAHSPYDHVWQVVIQKKGISEKVGITGTYHCCLTSKSLTFVCIGPEKTPNGEDRVASIEILLTTIRRCGHASPQCIFYVELGRQSVLGSGDLWMETDNAAIATNMHNTILSAMSAKTESNTNLINVYQNRPDLSHEPMRKRSSSANEASKPINVNVIQNSQNSLELRSCSSPHNYGFGRERCDSLPTRNGTLSESSNQTYFGSNHGLRSNTISGIRPHSTNKHSNSPTFTMPLRCSESEESSISVDESDDNGSFSHYRLNTRSSETAIPEENIDDFASAELFSKVTEQNVSDENYIPMNPVNPTDAIHEKEKADMQRLEDASLHFNFPEHASEKLAKDFDLDSDNQCCRPIRAYSIGNKVEHLKFNKRLGHLNDTGQNPNRVRAYSVGSKSKIPRCDLQRVVLVEDNKHEFTANRSQSSITKEGTSYGSSANRQKKSTSAPLLSLKNQINSDRMSDLMEIDFSQATNLEKQKFIKNNEIPKYIENVFPKAPRTDSSSLTLHATSQKDIFNGTKLNNTAITSEDGYLEMKPVGNGYTPSSNCLPMKVEKLKLSDYQTAPPLTATAAPVHDLNKISTYNISAEKWREQPSRSEEKKSNSPLNDNTFSSKPTNVESTSKSHDVHSANQIDCEKVCAQSSDKLNNHLADKIVENNNLDIGGHEEKKLVHSISSEDYTQIKDKSNDFTKFNEAGYKILQIKSDSSLISSKLYQKGIHKDNLERSQRLTESVNTIPDNATATAVSSSSLTKFNINSAKPAAAADSRSTGTDPSTPQNILQIKDLNFPSRSSSRISQPELHYASLDLPHCSGQNPAKYLKRGSRESPPVSACPEDGNTYAKIDFDQSDSSSSSSNIFNT.

Positions 8–109 (GMALSGYLKK…WLDKLLVLQR (102 aa)) constitute a PH domain. In terms of domain architecture, IRS-type PTB spans 122-236 (YDHVWQVVIQ…SAMSAKTESN (115 aa)). The segment at 248–269 (DLSHEPMRKRSSSANEASKPIN) is disordered. Phosphoserine is present on residues Ser286 and Ser287. A compositionally biased stretch (polar residues) spans 304-329 (RNGTLSESSNQTYFGSNHGLRSNTIS). Positions 304 to 370 (RNGTLSESSN…VDESDDNGSF (67 aa)) are disordered. The residue at position 342 (Ser342) is a Phosphoserine. Phosphotyrosine; by INSR is present on Tyr411. The YXXM motif 1 motif lies at 411–414 (YIPM). Positions 528 to 555 (TANRSQSSITKEGTSYGSSANRQKKSTS) are disordered. The segment covering 529–555 (ANRSQSSITKEGTSYGSSANRQKKSTS) has biased composition (polar residues). Ser555 carries the phosphoserine modification. Residues 641-644 (YLEM) carry the YXXM motif 2 motif. Positions 697 to 711 (EKWREQPSRSEEKKS) are enriched in basic and acidic residues. The interval 697–739 (EKWREQPSRSEEKKSNSPLNDNTFSSKPTNVESTSKSHDVHSA) is disordered. A compositionally biased stretch (polar residues) spans 712–730 (NSPLNDNTFSSKPTNVEST). Tyr911 is subject to Phosphotyrosine; by INSR. The interval 922–968 (QNPAKYLKRGSRESPPVSACPEDGNTYAKIDFDQSDSSSSSSNIFNT) is disordered. Ser932 and Ser935 each carry phosphoserine. Position 948 is a phosphotyrosine; by INSR (Tyr948). The segment covering 956 to 968 (SDSSSSSSNIFNT) has biased composition (low complexity).

In terms of assembly, bindings to phosphatidylinositol 3-kinase and SHP2.

Its function is as follows. Activates phosphatidylinositol 3-kinase when bound to the regulatory p85 subunit. May mediate the control of various cellular processes by insulin-like peptides. When phosphorylated by the insulin receptor binds specifically to various cellular proteins containing SH2 domains. Involved in control of cell proliferation, cell size, and body and organ growth throughout development. Also has a role in a signaling pathway controlling the physiological response required to endure periods of low nutrient conditions. Insulin/insulin-like growth factor (IGF) signaling pathway has a role in regulating aging and is necessary in the ovary for vitellogenic maturation. This is Insulin receptor substrate 1 (chico) from Drosophila melanogaster (Fruit fly).